Consider the following 654-residue polypeptide: 4-hydroxy-3-methylbut-2-en-1-yl diphosphate synthase (flavodoxin) (654 aa).

Positions 557, 560, 591, and 598 each coordinate [4Fe-4S] cluster.

Belongs to the IspG family. Requires [4Fe-4S] cluster as cofactor.

It carries out the reaction (2E)-4-hydroxy-3-methylbut-2-enyl diphosphate + oxidized [flavodoxin] + H2O + 2 H(+) = 2-C-methyl-D-erythritol 2,4-cyclic diphosphate + reduced [flavodoxin]. Its pathway is isoprenoid biosynthesis; isopentenyl diphosphate biosynthesis via DXP pathway; isopentenyl diphosphate from 1-deoxy-D-xylulose 5-phosphate: step 5/6. Its function is as follows. Converts 2C-methyl-D-erythritol 2,4-cyclodiphosphate (ME-2,4cPP) into 1-hydroxy-2-methyl-2-(E)-butenyl 4-diphosphate. The protein is 4-hydroxy-3-methylbut-2-en-1-yl diphosphate synthase (flavodoxin) of Protochlamydia amoebophila (strain UWE25).